The primary structure comprises 704 residues: DNA ligase (704 aa).

NAD(+) contacts are provided by residues 44 to 48, 93 to 94, and glutamate 125; these read DYEYD and SI. Lysine 127 serves as the catalytic N6-AMP-lysine intermediate. Arginine 148, glutamate 184, lysine 300, and lysine 324 together coordinate NAD(+). Zn(2+)-binding residues include cysteine 418, cysteine 421, cysteine 436, and cysteine 442. One can recognise a BRCT domain in the interval 625–704; that stretch reads IISSNISGKI…DEWEHLINEK (80 aa).

It belongs to the NAD-dependent DNA ligase family. LigA subfamily. Mg(2+) serves as cofactor. Requires Mn(2+) as cofactor.

It carries out the reaction NAD(+) + (deoxyribonucleotide)n-3'-hydroxyl + 5'-phospho-(deoxyribonucleotide)m = (deoxyribonucleotide)n+m + AMP + beta-nicotinamide D-nucleotide.. In terms of biological role, DNA ligase that catalyzes the formation of phosphodiester linkages between 5'-phosphoryl and 3'-hydroxyl groups in double-stranded DNA using NAD as a coenzyme and as the energy source for the reaction. It is essential for DNA replication and repair of damaged DNA. This is DNA ligase from Pelobacter propionicus (strain DSM 2379 / NBRC 103807 / OttBd1).